The sequence spans 574 residues: Glutamate--tRNA ligase (574 aa).

A 'HIGH' region motif is present at residues P109–N119.

This sequence belongs to the class-I aminoacyl-tRNA synthetase family. Glutamate--tRNA ligase type 2 subfamily.

Its subcellular location is the cytoplasm. It catalyses the reaction tRNA(Glu) + L-glutamate + ATP = L-glutamyl-tRNA(Glu) + AMP + diphosphate. Catalyzes the attachment of glutamate to tRNA(Glu) in a two-step reaction: glutamate is first activated by ATP to form Glu-AMP and then transferred to the acceptor end of tRNA(Glu). The sequence is that of Glutamate--tRNA ligase from Aeropyrum pernix (strain ATCC 700893 / DSM 11879 / JCM 9820 / NBRC 100138 / K1).